Consider the following 404-residue polypeptide: uncharacterized protein (404 aa).

6 helical membrane-spanning segments follow: residues 37-57 (LLIL…FVQF), 92-112 (IYNV…FVLG), 122-142 (LLTL…SYIP), 188-208 (MFYA…ILII), 230-250 (IGGI…TIGT), and 272-292 (AFFL…LGIF).

It is found in the cell membrane. This is an uncharacterized protein from Mycoplasma pneumoniae (strain ATCC 29342 / M129 / Subtype 1) (Mycoplasmoides pneumoniae).